The sequence spans 180 residues: Adenine phosphoribosyltransferase (180 aa).

This sequence belongs to the purine/pyrimidine phosphoribosyltransferase family. As to quaternary structure, homodimer.

The protein resides in the cytoplasm. It catalyses the reaction AMP + diphosphate = 5-phospho-alpha-D-ribose 1-diphosphate + adenine. It functions in the pathway purine metabolism; AMP biosynthesis via salvage pathway; AMP from adenine: step 1/1. In terms of biological role, catalyzes a salvage reaction resulting in the formation of AMP, that is energically less costly than de novo synthesis. The chain is Adenine phosphoribosyltransferase from Marinobacter nauticus (strain ATCC 700491 / DSM 11845 / VT8) (Marinobacter aquaeolei).